The sequence spans 85 residues: Large ribosomal subunit protein bL31B (85 aa).

The protein belongs to the bacterial ribosomal protein bL31 family. Type B subfamily. In terms of assembly, part of the 50S ribosomal subunit.

The chain is Large ribosomal subunit protein bL31B from Staphylococcus epidermidis (strain ATCC 35984 / DSM 28319 / BCRC 17069 / CCUG 31568 / BM 3577 / RP62A).